We begin with the raw amino-acid sequence, 523 residues long: 2-isopropylmalate synthase (523 aa).

The region spanning 5–267 is the Pyruvate carboxyltransferase domain; that stretch reads VIIFDTTLRD…HTAINHQEIW (263 aa). Mn(2+) is bound by residues Asp14, His202, His204, and Asn238. The tract at residues 392 to 523 is regulatory domain; sequence RLDYFSVQSG…QHNENNKETV (132 aa).

It belongs to the alpha-IPM synthase/homocitrate synthase family. LeuA type 1 subfamily. In terms of assembly, homodimer. Requires Mn(2+) as cofactor.

It is found in the cytoplasm. The catalysed reaction is 3-methyl-2-oxobutanoate + acetyl-CoA + H2O = (2S)-2-isopropylmalate + CoA + H(+). It functions in the pathway amino-acid biosynthesis; L-leucine biosynthesis; L-leucine from 3-methyl-2-oxobutanoate: step 1/4. Functionally, catalyzes the condensation of the acetyl group of acetyl-CoA with 3-methyl-2-oxobutanoate (2-ketoisovalerate) to form 3-carboxy-3-hydroxy-4-methylpentanoate (2-isopropylmalate). The sequence is that of 2-isopropylmalate synthase from Escherichia coli O157:H7.